A 536-amino-acid chain; its full sequence is Chaperonin GroEL 2 (536 aa).

ATP contacts are provided by residues 29-32 (TLGP), 86-90 (DGTTT), G413, 476-478 (NAA), and D492.

The protein belongs to the chaperonin (HSP60) family. As to quaternary structure, forms a cylinder of 14 subunits composed of two heptameric rings stacked back-to-back. Interacts with the co-chaperonin GroES.

It localises to the cytoplasm. The catalysed reaction is ATP + H2O + a folded polypeptide = ADP + phosphate + an unfolded polypeptide.. Together with its co-chaperonin GroES, plays an essential role in assisting protein folding. The GroEL-GroES system forms a nano-cage that allows encapsulation of the non-native substrate proteins and provides a physical environment optimized to promote and accelerate protein folding. The chain is Chaperonin GroEL 2 from Moorella thermoacetica (strain ATCC 39073 / JCM 9320).